Consider the following 421-residue polypeptide: Testin (421 aa).

Residues 92–199 (MILTNPVAAK…GDVKLPCEMD (108 aa)) enclose the PET domain. Positions 133–164 (EKQPVAGSEGAQYRKKQLAKQLPAHDQDPSKC) are disordered. The span at 155-164 (PAHDQDPSKC) shows a compositional bias: basic and acidic residues. LIM zinc-binding domains lie at 234-297 (YSCY…CDSE), 299-359 (PRCA…NHAV), and 362-421 (QGCH…KMMS).

It belongs to the prickle / espinas / testin family. Interacts via LIM domain 1 with ZYX. Interacts (via LIM domain 3) with ENAH and VASP. Interacts with ALKBH4, talin, actin, alpha-actinin, GRIP1 and PXN. Interacts (via LIM domain 2) with ACTL7A (via N-terminus). Heterodimer with ACTL7A; the heterodimer interacts with ENAH to form a heterotrimer.

The protein resides in the cytoplasm. The protein localises to the cell junction. It is found in the focal adhesion. Scaffold protein that may play a role in cell adhesion, cell spreading and in the reorganization of the actin cytoskeleton. Plays a role in the regulation of cell proliferation. May act as a tumor suppressor. In Callithrix jacchus (White-tufted-ear marmoset), this protein is Testin (TES).